The following is a 130-amino-acid chain: Glycine cleavage system H protein (130 aa).

The 82-residue stretch at 22 to 103 folds into the Lipoyl-binding domain; that stretch reads QAWIGISDYA…PYANYIVVVA (82 aa). The residue at position 63 (Lys63) is an N6-lipoyllysine.

It belongs to the GcvH family. The glycine cleavage system is composed of four proteins: P, T, L and H. The cofactor is (R)-lipoate.

Functionally, the glycine cleavage system catalyzes the degradation of glycine. The H protein shuttles the methylamine group of glycine from the P protein to the T protein. In Syntrophomonas wolfei subsp. wolfei (strain DSM 2245B / Goettingen), this protein is Glycine cleavage system H protein.